A 474-amino-acid polypeptide reads, in one-letter code: tRNA modification GTPase MnmE (474 aa).

Arg-25, Glu-82, and Lys-123 together coordinate (6S)-5-formyl-5,6,7,8-tetrahydrofolate. The TrmE-type G domain maps to 219–386; it reads GIKVVIAGKP…LKKHLYDSAM (168 aa). Asn-229 contacts K(+). Residues 229 to 234, 248 to 254, and 273 to 276 contribute to the GTP site; these read NAGKSS, SNISGTT, and DTAG. Residue Ser-233 participates in Mg(2+) binding. Positions 248, 250, and 253 each coordinate K(+). Position 254 (Thr-254) interacts with Mg(2+). Residue Lys-474 participates in (6S)-5-formyl-5,6,7,8-tetrahydrofolate binding.

The protein belongs to the TRAFAC class TrmE-Era-EngA-EngB-Septin-like GTPase superfamily. TrmE GTPase family. In terms of assembly, homodimer. Heterotetramer of two MnmE and two MnmG subunits. Requires K(+) as cofactor.

It is found in the cytoplasm. In terms of biological role, exhibits a very high intrinsic GTPase hydrolysis rate. Involved in the addition of a carboxymethylaminomethyl (cmnm) group at the wobble position (U34) of certain tRNAs, forming tRNA-cmnm(5)s(2)U34. The polypeptide is tRNA modification GTPase MnmE (Blochmanniella floridana).